A 372-amino-acid chain; its full sequence is Cyclin-dependent kinase 9 (372 aa).

The region spanning 19–315 (YEKLAKIGQG…SDDALNHDFF (297 aa)) is the Protein kinase domain. ATP-binding positions include 25-33 (IGQGTFGEV) and Lys48. Residue Asp149 is the Proton acceptor of the active site. A disordered region spans residues 341–372 (PPRRRGGHMPQQPANQGRNPAATNQTEFDRVF). The segment covering 352–366 (QPANQGRNPAATNQT) has biased composition (polar residues).

It belongs to the protein kinase superfamily. CMGC Ser/Thr protein kinase family. CDC2/CDKX subfamily. Associates with cyclin-T to form P-TEFb. Also associates with cyclin-K.

Its subcellular location is the nucleus. It catalyses the reaction L-seryl-[protein] + ATP = O-phospho-L-seryl-[protein] + ADP + H(+). The enzyme catalyses L-threonyl-[protein] + ATP = O-phospho-L-threonyl-[protein] + ADP + H(+). The catalysed reaction is [DNA-directed RNA polymerase] + ATP = phospho-[DNA-directed RNA polymerase] + ADP + H(+). In terms of biological role, member of the cyclin-dependent kinase pair (CDK9/cyclin-T) complex, also called positive transcription elongation factor b (P-TEFb), which facilitates the transition from abortive to production elongation by phosphorylating the CTD (C-terminal domain) of the large subunit of RNA polymerase II (RNAP II), SUPT5H and RDBP. The CDK9/cyclin-K complex also has a kinase activity toward CTD of RNAP II and can substitute for P-TEFb in vitro. The polypeptide is Cyclin-dependent kinase 9 (CDK9) (Gallus gallus (Chicken)).